Here is a 169-residue protein sequence, read N- to C-terminus: Ribosome maturation factor RimM (169 aa).

The PRC barrel domain maps to 95-168 (PPDTAYIHDL…EMTIRRFDEF (74 aa)).

It belongs to the RimM family. In terms of assembly, binds ribosomal protein uS19.

The protein resides in the cytoplasm. In terms of biological role, an accessory protein needed during the final step in the assembly of 30S ribosomal subunit, possibly for assembly of the head region. Essential for efficient processing of 16S rRNA. May be needed both before and after RbfA during the maturation of 16S rRNA. It has affinity for free ribosomal 30S subunits but not for 70S ribosomes. The protein is Ribosome maturation factor RimM of Prosthecochloris aestuarii (strain DSM 271 / SK 413).